The sequence spans 293 residues: 4-diphosphocytidyl-2-C-methyl-D-erythritol kinase (293 aa).

The active site involves Lys-10. 94 to 104 (PVSAGLAGGSS) is a binding site for ATP. Asp-136 is a catalytic residue.

It belongs to the GHMP kinase family. IspE subfamily.

The enzyme catalyses 4-CDP-2-C-methyl-D-erythritol + ATP = 4-CDP-2-C-methyl-D-erythritol 2-phosphate + ADP + H(+). Its pathway is isoprenoid biosynthesis; isopentenyl diphosphate biosynthesis via DXP pathway; isopentenyl diphosphate from 1-deoxy-D-xylulose 5-phosphate: step 3/6. In terms of biological role, catalyzes the phosphorylation of the position 2 hydroxy group of 4-diphosphocytidyl-2C-methyl-D-erythritol. The sequence is that of 4-diphosphocytidyl-2-C-methyl-D-erythritol kinase from Listeria monocytogenes serovar 1/2a (strain ATCC BAA-679 / EGD-e).